A 121-amino-acid chain; its full sequence is MARIAGINIPPQQHSEIGLTAIFGVGRNRARKICDACGIAYSKKVKDLTDLELEKIRDQVAQFTIEGDLRRETTMNIKRLMDIGCYRGFRHRRGLPMRGQRTRTNARTRKGPRKAAQSLKK.

Residues Arg93–Lys121 form a disordered region.

This sequence belongs to the universal ribosomal protein uS13 family. Part of the 30S ribosomal subunit. Forms a loose heterodimer with protein S19. Forms two bridges to the 50S subunit in the 70S ribosome.

Functionally, located at the top of the head of the 30S subunit, it contacts several helices of the 16S rRNA. In the 70S ribosome it contacts the 23S rRNA (bridge B1a) and protein L5 of the 50S subunit (bridge B1b), connecting the 2 subunits; these bridges are implicated in subunit movement. Contacts the tRNAs in the A and P-sites. This is Small ribosomal subunit protein uS13 from Albidiferax ferrireducens (strain ATCC BAA-621 / DSM 15236 / T118) (Rhodoferax ferrireducens).